Reading from the N-terminus, the 1409-residue chain is Protein three rows (1409 aa).

Positions 1052–1058 are separase cleavage-site; the sequence is VEPIRKQ. Disordered regions lie at residues 1260 to 1284 and 1297 to 1409; these read PIGC…SDHV and DDAA…RQRN. Composition is skewed to low complexity over residues 1264 to 1273 and 1300 to 1310; these read SNSSSSSSKS and ASVSASTPAPS.

Interacts with pim and Sse. Cleavage of thr contributes to inactivation of Sse.

Its subcellular location is the cytoplasm. Required specifically for chromosome disjunction during all mitoses; maternally provided protein is sufficient until mitosis 14 then zygotic protein is required. Involved in formation and/or maintenance of epithelial structures: bud extension during Malpighian tubule development, and foregut and hindgut morphogenesis. The chain is Protein three rows (thr) from Drosophila pseudoobscura pseudoobscura (Fruit fly).